The sequence spans 426 residues: Glutamate-1-semialdehyde 2,1-aminomutase (426 aa).

Lys265 is subject to N6-(pyridoxal phosphate)lysine.

The protein belongs to the class-III pyridoxal-phosphate-dependent aminotransferase family. HemL subfamily. Homodimer. The cofactor is pyridoxal 5'-phosphate.

The protein resides in the cytoplasm. The enzyme catalyses (S)-4-amino-5-oxopentanoate = 5-aminolevulinate. Its pathway is porphyrin-containing compound metabolism; protoporphyrin-IX biosynthesis; 5-aminolevulinate from L-glutamyl-tRNA(Glu): step 2/2. This Enterobacter sp. (strain 638) protein is Glutamate-1-semialdehyde 2,1-aminomutase.